Consider the following 476-residue polypeptide: uncharacterized protein (476 aa).

Helical transmembrane passes span 4–24 (FFSF…LFGA), 81–101 (ALAI…AAFI), 141–161 (WMGV…FSGV), 174–194 (FDFP…LAIT), 207–227 (FVPL…VMNI), 233–253 (VIWS…GAAG), 300–320 (MIGI…LILL), 351–371 (FVTL…YIYA), 391–411 (ICTF…MWQL), and 414–434 (IIMA…SPVV).

Belongs to the alanine or glycine:cation symporter (AGCS) (TC 2.A.25) family.

The protein resides in the cell inner membrane. This is an uncharacterized protein from Escherichia coli (strain K12).